We begin with the raw amino-acid sequence, 236 residues long: 2-C-methyl-D-erythritol 4-phosphate cytidylyltransferase (236 aa).

This sequence belongs to the IspD/TarI cytidylyltransferase family. IspD subfamily. As to quaternary structure, homodimer.

It catalyses the reaction 2-C-methyl-D-erythritol 4-phosphate + CTP + H(+) = 4-CDP-2-C-methyl-D-erythritol + diphosphate. Its pathway is isoprenoid biosynthesis; isopentenyl diphosphate biosynthesis via DXP pathway; isopentenyl diphosphate from 1-deoxy-D-xylulose 5-phosphate: step 2/6. Functionally, catalyzes the formation of 4-diphosphocytidyl-2-C-methyl-D-erythritol from CTP and 2-C-methyl-D-erythritol 4-phosphate (MEP). The chain is 2-C-methyl-D-erythritol 4-phosphate cytidylyltransferase from Salmonella typhimurium (strain LT2 / SGSC1412 / ATCC 700720).